The primary structure comprises 447 residues: NAD-dependent histone deacetylase HST3 (447 aa).

A disordered region spans residues 1–21 (MTSVSPSPPASRSGSMCSDLP). The region spanning 35 to 363 (LDADDEVLRR…IKKLRQLKRE (329 aa)) is the Deacetylase sirtuin-type domain. NAD(+) is bound by residues 60-79 (GAGI…DGLY) and 151-154 (QNID). His187 (proton acceptor) is an active-site residue. The Zn(2+) site is built by Cys195, Cys198, Cys220, and Cys223. NAD(+)-binding positions include 282–284 (GTS), 312–314 (NKT), and Cys333. Over residues 365–375 (SDLRKQMKAQK) the composition is skewed to basic and acidic residues. Disordered stretches follow at residues 365–393 (SDLR…QGID) and 411–447 (KRKI…NQAS).

The protein belongs to the sirtuin family. Class I subfamily. Zn(2+) serves as cofactor.

The protein localises to the cytoplasm. Its subcellular location is the nucleus. It carries out the reaction N(6)-acetyl-L-lysyl-[protein] + NAD(+) + H2O = 2''-O-acetyl-ADP-D-ribose + nicotinamide + L-lysyl-[protein]. Functionally, NAD-dependent histone deacetylase, which contributes together with HST4 to histone H3 'Lys-56' deacetylation, regulation of telomeric silencing, proper cell cycle progression, DNA damage control, DNA recombination, and genomic maintenance. The sequence is that of NAD-dependent histone deacetylase HST3 (HST3) from Saccharomyces cerevisiae (strain ATCC 204508 / S288c) (Baker's yeast).